Here is a 397-residue protein sequence, read N- to C-terminus: MLACHHNCKHFGICGGCSSPQTEYELSLKAKELALHNLFSPLIPSQKILPVIPCSPILRGRNKMEFSFYQTVDGEKTLGFISPSKPKKGIPITECLMIDERAIDILNYTRSWWATHPELSAYYPPLNKGSLCTLTVRIGNVSNDFMIILTTSGREEFAVPLSVIQEWQKTLLDSGLPITSIFWEEKLSARNSPTTFRTTHLYGEQFLKQQLSIEGRSNIFHVRPRSFFQPQSRQAEKIIQTIKDFISPTGEETLLDLYCGAGTIGISLSPYVKKIIGVELVPDAVASAQENIQLNSANMEVFLEDAKQFCRRHEHLPPLDIVVIDPPRCGMQNKALKYLLRMSPKKIIYVSCNPLTQISECSILVEHGYQLQRMQPIDQFPHTHHLENVVLLERLSF.

[4Fe-4S] cluster-binding residues include cysteine 8, cysteine 14, cysteine 17, and cysteine 95. Residues glutamine 229, tyrosine 258, glutamate 279, and aspartate 325 each coordinate S-adenosyl-L-methionine. Cysteine 352 functions as the Nucleophile in the catalytic mechanism.

Belongs to the class I-like SAM-binding methyltransferase superfamily. RNA M5U methyltransferase family.

This is an uncharacterized protein from Chlamydia muridarum (strain MoPn / Nigg).